Here is a 279-residue protein sequence, read N- to C-terminus: uncharacterized protein (279 aa).

This sequence belongs to the peptidase C59 family.

This is an uncharacterized protein from Chlorella (PBCV-1).